The primary structure comprises 271 residues: Tryptophan synthase alpha chain (271 aa).

Catalysis depends on proton acceptor residues glutamate 49 and aspartate 60.

It belongs to the TrpA family. As to quaternary structure, tetramer of two alpha and two beta chains.

The catalysed reaction is (1S,2R)-1-C-(indol-3-yl)glycerol 3-phosphate + L-serine = D-glyceraldehyde 3-phosphate + L-tryptophan + H2O. It functions in the pathway amino-acid biosynthesis; L-tryptophan biosynthesis; L-tryptophan from chorismate: step 5/5. The alpha subunit is responsible for the aldol cleavage of indoleglycerol phosphate to indole and glyceraldehyde 3-phosphate. This is Tryptophan synthase alpha chain from Burkholderia ambifaria (strain MC40-6).